The chain runs to 292 residues: uncharacterized protein (292 aa).

Residues 175-197 (VLNFYFTALPYAIDGIISGIGVF) form a helical membrane-spanning segment.

It localises to the membrane. This is an uncharacterized protein from Methanocaldococcus jannaschii (strain ATCC 43067 / DSM 2661 / JAL-1 / JCM 10045 / NBRC 100440) (Methanococcus jannaschii).